We begin with the raw amino-acid sequence, 733 residues long: Oligopeptide transporter 8 (733 aa).

Transmembrane regions (helical) follow at residues 42–62, 66–86, 115–135, 147–167, 209–229, 244–264, 281–301, 357–377, 413–433, 442–462, 531–551, 596–616, 644–664, and 677–697; these read MWVL…FFWY, PLTI…HLMA, VLIT…HILS, FLPA…WAGL, FFVI…YLFT, SILV…SFGL, FFAS…ITPL, FAVT…HVLI, LWWF…ICIY, WWGA…VGVI, VGTL…MAEI, YSNI…VYLA, ASAV…HFVF, and VLSG…FLAL.

This sequence belongs to the oligopeptide OPT transporter (TC 2.A.67.1) family.

The protein resides in the membrane. May be involved in the translocation of tetra- and pentapeptides across the cellular membrane in an energy-dependent manner. The chain is Oligopeptide transporter 8 (OPT8) from Arabidopsis thaliana (Mouse-ear cress).